Reading from the N-terminus, the 974-residue chain is UvrABC system protein A (974 aa).

34 to 41 contributes to the ATP binding site; it reads GLSGSGKS. ABC transporter domains follow at residues 331–610 and 630–959; these read WARS…TNSL and ISKT…QFLK. 663-670 is an ATP binding site; that stretch reads GVSGGGKS. The segment at 762 to 788 adopts a C4-type zinc-finger fold; the sequence is CEACQGDGVIKIEMHFLPDVYVTCDVC.

Belongs to the ABC transporter superfamily. UvrA family. In terms of assembly, forms a heterotetramer with UvrB during the search for lesions.

It localises to the cytoplasm. Functionally, the UvrABC repair system catalyzes the recognition and processing of DNA lesions. UvrA is an ATPase and a DNA-binding protein. A damage recognition complex composed of 2 UvrA and 2 UvrB subunits scans DNA for abnormalities. When the presence of a lesion has been verified by UvrB, the UvrA molecules dissociate. The chain is UvrABC system protein A from Brucella suis biovar 1 (strain 1330).